The chain runs to 508 residues: Photosystem II CP47 reaction center protein (508 aa).

6 consecutive transmembrane segments (helical) span residues 21–36, 101–115, 140–156, 203–218, 237–252, and 457–472; these read SVHIMHTALVSGWAGS, IVFSGLCFLAAIWHW, GIHLFLAGVACFGFGAF, IAAGTLGILAGLFHLS, VLSSSIAAVFFAAFVV, and TFALLFFFGHIWHGAR.

It belongs to the PsbB/PsbC family. PsbB subfamily. As to quaternary structure, PSII is composed of 1 copy each of membrane proteins PsbA, PsbB, PsbC, PsbD, PsbE, PsbF, PsbH, PsbI, PsbJ, PsbK, PsbL, PsbM, PsbT, PsbX, PsbY, PsbZ, Psb30/Ycf12, at least 3 peripheral proteins of the oxygen-evolving complex and a large number of cofactors. It forms dimeric complexes. Requires Binds multiple chlorophylls. PSII binds additional chlorophylls, carotenoids and specific lipids. as cofactor.

The protein localises to the plastid. It localises to the chloroplast thylakoid membrane. Functionally, one of the components of the core complex of photosystem II (PSII). It binds chlorophyll and helps catalyze the primary light-induced photochemical processes of PSII. PSII is a light-driven water:plastoquinone oxidoreductase, using light energy to abstract electrons from H(2)O, generating O(2) and a proton gradient subsequently used for ATP formation. The chain is Photosystem II CP47 reaction center protein from Oryza sativa subsp. indica (Rice).